A 234-amino-acid polypeptide reads, in one-letter code: Interleukin-34 (234 aa).

A signal peptide spans 1–20 (MPWGLAWLYCLGILLDVALG). N-linked (GlcNAc...) asparagine glycosylation is present at N99. Residues 215 to 234 (PRQPPTSLPRSPSSNHGPLP) are disordered. The segment covering 222 to 234 (LPRSPSSNHGPLP) has biased composition (polar residues).

This sequence belongs to the IL-34 family. Homodimer. Interacts with CSF1R.

Its subcellular location is the secreted. Functionally, cytokine that promotes the proliferation, survival and differentiation of monocytes and macrophages. Promotes the release of pro-inflammatory chemokines, and thereby plays an important role in innate immunity and in inflammatory processes. Plays an important role in the regulation of osteoclast proliferation and differentiation, and in the regulation of bone resorption. Signaling via CSF1R and its downstream effectors stimulates phosphorylation of MAPK1/ERK2 AND MAPK3/ERK1. This Rattus norvegicus (Rat) protein is Interleukin-34 (Il34).